The chain runs to 844 residues: Aminopeptidase N (844 aa).

Substrate contacts are provided by residues glutamate 120 and 253 to 257; that span reads GAMEN. Histidine 289 lines the Zn(2+) pocket. Catalysis depends on glutamate 290, which acts as the Proton acceptor. Positions 293 and 312 each coordinate Zn(2+).

Belongs to the peptidase M1 family. In terms of assembly, monomer. It depends on Zn(2+) as a cofactor.

It localises to the cytoplasm. The enzyme catalyses Release of an N-terminal amino acid, Xaa-|-Yaa- from a peptide, amide or arylamide. Xaa is preferably Ala, but may be most amino acids including Pro (slow action). When a terminal hydrophobic residue is followed by a prolyl residue, the two may be released as an intact Xaa-Pro dipeptide.. Functionally, aminopeptidase N is involved in the degradation of intracellular peptides generated by protein breakdown during normal growth as well as in response to nutrient starvation. The sequence is that of Aminopeptidase N (pepN) from Lactobacillus helveticus (Lactobacillus suntoryeus).